The sequence spans 502 residues: ATP synthase subunit alpha (502 aa).

An ATP-binding site is contributed by 169–176; that stretch reads GDRQTGKT.

This sequence belongs to the ATPase alpha/beta chains family. As to quaternary structure, F-type ATPases have 2 components, CF(1) - the catalytic core - and CF(0) - the membrane proton channel. CF(1) has five subunits: alpha(3), beta(3), gamma(1), delta(1), epsilon(1). CF(0) has three main subunits: a(1), b(2) and c(9-12). The alpha and beta chains form an alternating ring which encloses part of the gamma chain. CF(1) is attached to CF(0) by a central stalk formed by the gamma and epsilon chains, while a peripheral stalk is formed by the delta and b chains.

The protein localises to the cell membrane. The enzyme catalyses ATP + H2O + 4 H(+)(in) = ADP + phosphate + 5 H(+)(out). Functionally, produces ATP from ADP in the presence of a proton gradient across the membrane. The alpha chain is a regulatory subunit. The polypeptide is ATP synthase subunit alpha (Staphylococcus aureus (strain bovine RF122 / ET3-1)).